A 417-amino-acid chain; its full sequence is Gamma-glutamyl phosphate reductase (417 aa).

This sequence belongs to the gamma-glutamyl phosphate reductase family.

The protein localises to the cytoplasm. The catalysed reaction is L-glutamate 5-semialdehyde + phosphate + NADP(+) = L-glutamyl 5-phosphate + NADPH + H(+). It participates in amino-acid biosynthesis; L-proline biosynthesis; L-glutamate 5-semialdehyde from L-glutamate: step 2/2. In terms of biological role, catalyzes the NADPH-dependent reduction of L-glutamate 5-phosphate into L-glutamate 5-semialdehyde and phosphate. The product spontaneously undergoes cyclization to form 1-pyrroline-5-carboxylate. The protein is Gamma-glutamyl phosphate reductase of Pectobacterium carotovorum subsp. carotovorum (strain PC1).